Reading from the N-terminus, the 469-residue chain is MKSAVENLTPTRVKLNVEVPFEELKPSIDEAYKTVASQIQVPGFRKGKVPAKLIDQRVGRGYVLETAINEGLNGWYQEAVQETGIRPLSRPEVEITEVPDPTATDGELKFHAEVDVRPEIELPDYSGIKVEVAAAESSEADVDKALDELRGRFGTLKSVDRPAADGDFLTIDITASIDGAEVDSASGLSYQVGAGTMLEGLDEAVTGLSADEDAIFDTTLVGGDHAGEAAQVKVVVKSVKERELPEADDDFAQLASEFDTLAELREDLAKQAAESKVVEQGVEARDKVLDKLVELVEVPVPASVVEEQLEQHFKAENSHGDGEHDTEEHRAEVKANTERAFQNEIILDAIADKEEVGVSQNELIDYIVTTASQYGMDPNQFAQIIDQSGQVPMMVSEVRRRKALAVVLGQAEVTDSEGNKVDLSDFVRPGGEEEAAEAEAAPAVDSDAVEGEAATEEAAPSDDPAAVKF.

A PPIase FKBP-type domain is found at 166–245; sequence GDFLTIDITA…VKSVKERELP (80 aa). Positions 430 to 469 are disordered; that stretch reads GGEEEAAEAEAAPAVDSDAVEGEAATEEAAPSDDPAAVKF.

Belongs to the FKBP-type PPIase family. Tig subfamily.

The protein resides in the cytoplasm. It catalyses the reaction [protein]-peptidylproline (omega=180) = [protein]-peptidylproline (omega=0). Its function is as follows. Involved in protein export. Acts as a chaperone by maintaining the newly synthesized protein in an open conformation. Functions as a peptidyl-prolyl cis-trans isomerase. This is Trigger factor from Arthrobacter sp. (strain FB24).